Here is a 678-residue protein sequence, read N- to C-terminus: Electrogenic aspartate/glutamate antiporter SLC25A12, mitochondrial (678 aa).

Residue alanine 2 is modified to N-acetylalanine. A regulatory N-terminal domain region spans residues 2 to 294 (AVKVQTTKRG…TLADIERIAP (293 aa)). Topologically, residues 2–329 (AVKVQTTKRG…WLQIAESAYR (328 aa)) are mitochondrial intermembrane. Residues aspartate 65, threonine 67, aspartate 69, leucine 71, and glutamate 76 each coordinate Ca(2+). EF-hand domains are found at residues 65–76 (DQTKDGLISYQE), 86–121 (APDSMFIVAFQLFDKSGNGEVTFENVKEIFGQTIIH), 125–155 (PFNWDCEFIRLHFGHNRKKHLNYTEFTQFLQ), and 157–192 (LQLEHARQAFALKDKSKSGMISGLDFSDIMVTIRSH). Positions 295–310 (LAEGALPYNLAELQRQ) are linker loop domain. A carrier domain region spans residues 320–612 (WLQIAESAYR…RWFYIDFGGL (293 aa)). 3 Solcar repeats span residues 324–416 (AESA…VRDK), 424–508 (VPLP…CKLL), and 516–604 (VGGL…LQRW). The helical transmembrane segment at 330–347 (FTLGSVAGAVGATAVYPI) threads the bilayer. Residues 348-390 (DLVKTRMQNQRGSGSVVGELMYKNSFDCFKKVLRYEGFFGLYR) lie on the Mitochondrial matrix side of the membrane. The chain crosses the membrane as a helical span at residues 391 to 410 (GLIPQLIGVAPEKAIKLTVN). Topologically, residues 411–433 (DFVRDKFTRRDGSVPLPAEVLAG) are mitochondrial intermembrane. A helical membrane pass occupies residues 434-447 (GCAGGSQVIFTNPL). Residues 448 to 482 (EIVKIRLQVAGEITTGPRVSALNVLRDLGIFGLYK) are Mitochondrial matrix-facing. Residues 483 to 502 (GAKACFLRDIPFSAIYFPVY) form a helical membrane-spanning segment. Topologically, residues 503–521 (AHCKLLLADENGHVGGLNL) are mitochondrial intermembrane. A helical transmembrane segment spans residues 522–539 (LAAGAMAGVPAASLVTPA). The Mitochondrial matrix segment spans residues 540–578 (DVIKTRLQVAARAGQTTYSGVIDCFRKILREEGPSAFWK). Residues 579–598 (GTAARVFRSSPQFGVTLVTY) traverse the membrane as a helical segment. Residues 599–678 (ELLQRWFYID…QPKAAVAATQ (80 aa)) lie on the Mitochondrial intermembrane side of the membrane. Residues 613–675 (KPAGSEPTPK…AVVQPKAAVA (63 aa)) are C-terminal domain.

Belongs to the mitochondrial carrier (TC 2.A.29) family. As to quaternary structure, homodimer (via N-terminus). In terms of tissue distribution, expressed predominantly in the heart and skeletal muscle, weakly in brain and kidney.

The protein localises to the mitochondrion inner membrane. The catalysed reaction is L-aspartate(in) + L-glutamate(out) + H(+)(out) = L-aspartate(out) + L-glutamate(in) + H(+)(in). The enzyme catalyses 3-sulfino-L-alanine(out) + L-glutamate(in) + H(+)(in) = 3-sulfino-L-alanine(in) + L-glutamate(out) + H(+)(out). It catalyses the reaction 3-sulfino-L-alanine(out) + L-aspartate(in) = 3-sulfino-L-alanine(in) + L-aspartate(out). Its activity is regulated as follows. Activated by calcium-binding in the mitochondrial intermembrane space. Inhibited by pyridoxal 5'-phosphate, bathophenathroline, mercurials, diethyl pyrocarbonate and N-ethylmaleimide. Mitochondrial electrogenic aspartate/glutamate antiporter that favors efflux of aspartate and entry of glutamate and proton within the mitochondria as part of the malate-aspartate shuttle. Also mediates the uptake of L-cysteinesulfinate (3-sulfino-L-alanine) by mitochondria in exchange of L-glutamate and proton. Can also exchange L-cysteinesulfinate with aspartate in their anionic form without any proton translocation. Lacks transport activity towards L-glutamine or gamma-aminobutyric acid (GABA). This chain is Electrogenic aspartate/glutamate antiporter SLC25A12, mitochondrial, found in Homo sapiens (Human).